Reading from the N-terminus, the 477-residue chain is Aspartyl/glutamyl-tRNA(Asn/Gln) amidotransferase subunit B (477 aa).

The protein belongs to the GatB/GatE family. GatB subfamily. As to quaternary structure, heterotrimer of A, B and C subunits.

It catalyses the reaction L-glutamyl-tRNA(Gln) + L-glutamine + ATP + H2O = L-glutaminyl-tRNA(Gln) + L-glutamate + ADP + phosphate + H(+). The catalysed reaction is L-aspartyl-tRNA(Asn) + L-glutamine + ATP + H2O = L-asparaginyl-tRNA(Asn) + L-glutamate + ADP + phosphate + 2 H(+). Its function is as follows. Allows the formation of correctly charged Asn-tRNA(Asn) or Gln-tRNA(Gln) through the transamidation of misacylated Asp-tRNA(Asn) or Glu-tRNA(Gln) in organisms which lack either or both of asparaginyl-tRNA or glutaminyl-tRNA synthetases. The reaction takes place in the presence of glutamine and ATP through an activated phospho-Asp-tRNA(Asn) or phospho-Glu-tRNA(Gln). The protein is Aspartyl/glutamyl-tRNA(Asn/Gln) amidotransferase subunit B of Coxiella burnetii (strain CbuG_Q212) (Coxiella burnetii (strain Q212)).